Consider the following 157-residue polypeptide: 3-dehydroquinate dehydratase (157 aa).

The active-site Proton acceptor is Y24. N75, H81, and D88 together coordinate substrate. The Proton donor role is filled by H101. Residues 102 to 103 and R112 each bind substrate; that span reads LS.

It belongs to the type-II 3-dehydroquinase family. In terms of assembly, homododecamer.

The catalysed reaction is 3-dehydroquinate = 3-dehydroshikimate + H2O. Its pathway is metabolic intermediate biosynthesis; chorismate biosynthesis; chorismate from D-erythrose 4-phosphate and phosphoenolpyruvate: step 3/7. In terms of biological role, catalyzes a trans-dehydration via an enolate intermediate. This is 3-dehydroquinate dehydratase from Brucella abortus (strain S19).